Consider the following 211-residue polypeptide: Redox-sensing transcriptional repressor Rex (211 aa).

Positions 18 to 57 (LYYRFLKNLHASGKQRVSSAELSEAVKVDSATIRRDFSYF) form a DNA-binding region, H-T-H motif. 92–97 (GVGNLG) provides a ligand contact to NAD(+).

Belongs to the transcriptional regulatory Rex family. In terms of assembly, homodimer.

It localises to the cytoplasm. In terms of biological role, modulates transcription in response to changes in cellular NADH/NAD(+) redox state. This Anoxybacillus flavithermus (strain DSM 21510 / WK1) protein is Redox-sensing transcriptional repressor Rex.